The following is a 344-amino-acid chain: Beta-hexosaminidase (344 aa).

Residues Asp-60, Arg-68, Arg-132, and 162 to 163 (KH) each bind substrate. Catalysis depends on His-175, which acts as the Proton donor/acceptor. Catalysis depends on Asp-247, which acts as the Nucleophile.

The protein belongs to the glycosyl hydrolase 3 family. NagZ subfamily.

It is found in the cytoplasm. It carries out the reaction Hydrolysis of terminal non-reducing N-acetyl-D-hexosamine residues in N-acetyl-beta-D-hexosaminides.. Its pathway is cell wall biogenesis; peptidoglycan recycling. Functionally, plays a role in peptidoglycan recycling by cleaving the terminal beta-1,4-linked N-acetylglucosamine (GlcNAc) from peptide-linked peptidoglycan fragments, giving rise to free GlcNAc, anhydro-N-acetylmuramic acid and anhydro-N-acetylmuramic acid-linked peptides. This is Beta-hexosaminidase from Haemophilus ducreyi (strain 35000HP / ATCC 700724).